The following is a 137-amino-acid chain: MSITYKKDEKDLKNNTNNSKKKFIAKEFQSLLCVFTALRGTQITIQLRSNCEIYGTITNVDAYLNIELSDAKLTNTRYKNKRDEHVQEILIQSRNIRFIQIPDKIDLNSLLYLYSKQLSQSKKKYERTLRKPPPPTK.

Positions 30–105 constitute a Sm domain; that stretch reads SLLCVFTALR…IRFIQIPDKI (76 aa).

This is an uncharacterized protein from Dictyostelium discoideum (Social amoeba).